The chain runs to 187 residues: Ribosome-recycling factor (187 aa).

The protein belongs to the RRF family.

Its subcellular location is the cytoplasm. In terms of biological role, responsible for the release of ribosomes from messenger RNA at the termination of protein biosynthesis. May increase the efficiency of translation by recycling ribosomes from one round of translation to another. The protein is Ribosome-recycling factor of Parvibaculum lavamentivorans (strain DS-1 / DSM 13023 / NCIMB 13966).